We begin with the raw amino-acid sequence, 112 residues long: UPF0060 membrane protein CMS0846 (112 aa).

4 helical membrane passes run 6–26 (VILF…IWQA), 32–52 (PFWW…IATL), 61–81 (ILAA…TVVD), and 87–107 (RWDV…MAAP).

This sequence belongs to the UPF0060 family.

Its subcellular location is the cell membrane. The sequence is that of UPF0060 membrane protein CMS0846 from Clavibacter sepedonicus (Clavibacter michiganensis subsp. sepedonicus).